We begin with the raw amino-acid sequence, 495 residues long: Sialin (495 aa).

Basic and acidic residues predominate over residues 1-18; sequence MRSPVRDLARNDGEESTD. The interval 1-24 is disordered; it reads MRSPVRDLARNDGEESTDRTPLLP. The Cytoplasmic portion of the chain corresponds to 1 to 41; that stretch reads MRSPVRDLARNDGEESTDRTPLLPGAPRAEAAPVCCSARYN. Phosphoserine is present on Ser3. A Dileucine internalization motif motif is present at residues 22-23; that stretch reads LL. A helical membrane pass occupies residues 42 to 62; that stretch reads LAILAFFGFFIVYALRVNLSV. Topologically, residues 63–109 are lumenal; sequence ALVDMVDSNTTLEDNRTSKACPEHSAPIKVHHNQTGKKYQWDAETQG. 3 N-linked (GlcNAc...) asparagine glycosylation sites follow: Asn71, Asn77, and Asn95. A helical transmembrane segment spans residues 110-130; the sequence is WILGSFFYGYIITQIPGGYVA. The Cytoplasmic portion of the chain corresponds to 131–136; the sequence is SKIGGK. A helical membrane pass occupies residues 137 to 157; that stretch reads MLLGFGILGTAVLTLFTPIAA. Asp158 is a topological domain (lumenal). Residues 159 to 179 traverse the membrane as a helical segment; the sequence is LGVGPLIVLRALEGLGEGVTF. Residues 180-200 are Cytoplasmic-facing; that stretch reads PAMHAMWSSWAPPLERSKLLS. The chain crosses the membrane as a helical span at residues 201-221; the sequence is ISYAGAQLGTVISLPLSGIIC. Over 222–227 the chain is Lumenal; it reads YYMNWT. A helical transmembrane segment spans residues 228 to 248; sequence YVFYFFGTIGIFWFLLWIWLV. At 249 to 279 the chain is on the cytoplasmic side; the sequence is SDTPQKHKRISHYEKEYILSSLRNQLSSQKS. Residues 280-300 traverse the membrane as a helical segment; that stretch reads VPWVPILKSLPLWAIVVAHFS. Residues 301 to 328 lie on the Lumenal side of the membrane; that stretch reads YNWTFYTLLTLLPTYMKEILRFNVQENG. Residues 329-349 traverse the membrane as a helical segment; sequence FLSSLPYLGSWLCMILSGQAA. Topologically, residues 350–365 are cytoplasmic; that stretch reads DNLRAKWNFSTLCVRR. The chain crosses the membrane as a helical span at residues 366-386; the sequence is IFSLIGMIGPAVFLVAAGFIG. At 387-391 the chain is on the lumenal side; it reads CDYSL. The helical transmembrane segment at 392–412 threads the bilayer; that stretch reads AVAFLTISTTLGGFCSSGFSI. The Cytoplasmic portion of the chain corresponds to 413-423; the sequence is NHLDIAPSYAG. The helical transmembrane segment at 424–444 threads the bilayer; the sequence is ILLGITNTFATIPGMVGPVIA. Residues 445 to 457 lie on the Lumenal side of the membrane; it reads KSLTPDNTVGEWQ. Residues 458–478 traverse the membrane as a helical segment; the sequence is TVFYIAAAINVFGAIFFTLFA. The Cytoplasmic segment spans residues 479 to 495; sequence KGEVQNWALNDHHGHRH.

The protein belongs to the major facilitator superfamily. Sodium/anion cotransporter family. In the adult, detected in placenta, kidney and pancreas. Abundant in the endothelial cells of tumors from ovary, colon, breast and lung, but is not detected in endothelial cells from the corresponding normal tissues. Highly expressed in salivary glands and liver, with lower levels of expression in brain, spleen kidney, muscle and pancreas. Expressed in acinar cells of salivary glands (at protein level).

The protein localises to the basolateral cell membrane. The protein resides in the cytoplasmic vesicle. Its subcellular location is the secretory vesicle. It is found in the synaptic vesicle membrane. It localises to the lysosome membrane. It catalyses the reaction N-acetylneuraminate(in) + H(+)(in) = N-acetylneuraminate(out) + H(+)(out). The catalysed reaction is D-glucuronate(out) + H(+)(out) = D-glucuronate(in) + H(+)(in). It carries out the reaction 2 nitrate(out) + H(+)(out) = 2 nitrate(in) + H(+)(in). The enzyme catalyses L-aspartate(out) = L-aspartate(in). It catalyses the reaction L-glutamate(out) = L-glutamate(in). The catalysed reaction is N-acetyl-L-aspartyl-L-glutamate(out) = N-acetyl-L-aspartyl-L-glutamate(in). Multifunctional anion transporter that operates via two distinct transport mechanisms, namely proton-coupled anion cotransport and membrane potential-dependent anion transport. Electroneutral proton-coupled acidic monosaccharide symporter, with a sugar to proton stoichiometry of 1:1. Exports glucuronic acid and free sialic acid derived from sialoglycoconjugate degradation out of lysosomes, driven by outwardly directed lysosomal pH gradient. May regulate lysosome function and metabolism of sialylated conjugates that impact oligodendrocyte lineage differentiation and myelinogenesis in the central nervous system. Electrogenic proton-coupled nitrate symporter that transports nitrate ions across the basolateral membrane of salivary gland acinar cells, with nitrate to proton stoichiometry of 2:1. May contribute to nitrate clearance from serum by salivary glands, where it is further concentrated and secreted in the saliva. Uses membrane potential to drive the uptake of acidic amino acids and peptides into synaptic vesicles. Responsible for synaptic vesicular storage of L-aspartate and L-glutamate in pinealocytes as well as vesicular uptake of N-acetyl-L-aspartyl-L-glutamate neuropeptide, relevant to aspartegic-associated glutamatergic neurotransmission and activation of metabotropic receptors that inhibit subsequent transmitter release. Its function is as follows. Receptor for CM101, a polysaccharide produced by group B Streptococcus with antipathoangiogenic properties. In Homo sapiens (Human), this protein is Sialin (SLC17A5).